Here is a 316-residue protein sequence, read N- to C-terminus: MFARAPFVRLLSTTSRNLAEAEKKVSKEALMALRKKTGYSYVNCRKALIQFGENDMDSAVKWLKEAAAKEGWAKAAKLGTRVTSNGLVSVVTDNSTAAVVELSCETDFVARSGAFKDLLSNISNSVLAKAKPQSISSGSKLQEFTYDLGDLTDSDGKNMREVLSLSIGKLGENMTVRRVKAFKAPEGTTLFGASHPKDGTDDIPMGRFISLIALNQSSPGSISSQQLAGQICQHIIGMSPESLGEAAESVKTQEGLRSQEGHDPNADPVVVTNIDESETALLRQAFMLNPSQSVHEYLKSHNANILDFVRVELGSE.

Residues 1 to 18 constitute a mitochondrion transit peptide; the sequence is MFARAPFVRLLSTTSRNL. The interval 245–269 is disordered; it reads EAAESVKTQEGLRSQEGHDPNADPV.

Belongs to the EF-Ts family.

The protein localises to the mitochondrion. In terms of biological role, associates with the EF-Tu.GDP complex and induces the exchange of GDP to GTP. It remains bound to the aminoacyl-tRNA.EF-Tu.GTP complex up to the GTP hydrolysis stage on the ribosome. This Caenorhabditis elegans protein is Elongation factor Ts, mitochondrial.